Here is a 463-residue protein sequence, read N- to C-terminus: Bifunctional protein GlmU (463 aa).

The segment at 1–228 (MEQALSIVVL…PAEVQGVNDR (228 aa)) is pyrophosphorylase. Residues 10–13 (LAAG), Lys-24, Gln-75, 80–81 (GT), 102–104 (YGD), Gly-138, Glu-153, Asn-168, and Asn-226 contribute to the UDP-N-acetyl-alpha-D-glucosamine site. Asp-104 serves as a coordination point for Mg(2+). Residue Asn-226 participates in Mg(2+) binding. The interval 229–249 (VQLAAAERVWQRRQAEDWMRA) is linker. Positions 250–463 (GVTILDPDRF…RPDRGEGSDA (214 aa)) are N-acetyltransferase. Residues Arg-332 and Lys-350 each contribute to the UDP-N-acetyl-alpha-D-glucosamine site. Catalysis depends on His-362, which acts as the Proton acceptor. The UDP-N-acetyl-alpha-D-glucosamine site is built by Tyr-365 and Asn-376. Acetyl-CoA is bound by residues Ala-379, 385–386 (NY), Ser-404, Ala-422, and Arg-439. The disordered stretch occupies residues 437 to 463 (VARSAQRSIHGWRRPGQRPDRGEGSDA). Basic and acidic residues predominate over residues 453–463 (QRPDRGEGSDA).

It in the N-terminal section; belongs to the N-acetylglucosamine-1-phosphate uridyltransferase family. The protein in the C-terminal section; belongs to the transferase hexapeptide repeat family. Homotrimer. Mg(2+) is required as a cofactor.

It is found in the cytoplasm. It carries out the reaction alpha-D-glucosamine 1-phosphate + acetyl-CoA = N-acetyl-alpha-D-glucosamine 1-phosphate + CoA + H(+). The catalysed reaction is N-acetyl-alpha-D-glucosamine 1-phosphate + UTP + H(+) = UDP-N-acetyl-alpha-D-glucosamine + diphosphate. Its pathway is nucleotide-sugar biosynthesis; UDP-N-acetyl-alpha-D-glucosamine biosynthesis; N-acetyl-alpha-D-glucosamine 1-phosphate from alpha-D-glucosamine 6-phosphate (route II): step 2/2. It participates in nucleotide-sugar biosynthesis; UDP-N-acetyl-alpha-D-glucosamine biosynthesis; UDP-N-acetyl-alpha-D-glucosamine from N-acetyl-alpha-D-glucosamine 1-phosphate: step 1/1. The protein operates within bacterial outer membrane biogenesis; LPS lipid A biosynthesis. Catalyzes the last two sequential reactions in the de novo biosynthetic pathway for UDP-N-acetylglucosamine (UDP-GlcNAc). The C-terminal domain catalyzes the transfer of acetyl group from acetyl coenzyme A to glucosamine-1-phosphate (GlcN-1-P) to produce N-acetylglucosamine-1-phosphate (GlcNAc-1-P), which is converted into UDP-GlcNAc by the transfer of uridine 5-monophosphate (from uridine 5-triphosphate), a reaction catalyzed by the N-terminal domain. This chain is Bifunctional protein GlmU, found in Alkalilimnicola ehrlichii (strain ATCC BAA-1101 / DSM 17681 / MLHE-1).